We begin with the raw amino-acid sequence, 404 residues long: Multidrug resistance protein MdtG (404 aa).

Transmembrane regions (helical) follow at residues 19–39, 56–76, 90–110, 113–133, 144–164, 171–191, 222–242, 254–274, 288–308, 317–337, and 376–396; these read LGCFLTGAAFSLVMPFLPLYV, LVFSITFLFSAIASPFWGGLA, LGMAIVMLLMGMAQNIWQFLI, ALLGLLGGFIPNANALIATQA, TLSTGGVSGALLGPLAGGLLA, PVFFITASVLFICFLLTFFFI, LFVTTLIIQVATGSIAPILTL, IAFISGMIASVPGVAALLSAP, ILIVALIISVLLLIPMSFVQT, FLLGAADGALLPAVQTLLVYN, and AVFCVTAGVVLFNAIYSWNSL.

This sequence belongs to the major facilitator superfamily. DHA1 family. MdtG (TC 2.A.1.2.20) subfamily.

It localises to the cell inner membrane. The sequence is that of Multidrug resistance protein MdtG from Salmonella paratyphi A (strain ATCC 9150 / SARB42).